Consider the following 255-residue polypeptide: Ribonuclease HII (255 aa).

The RNase H type-2 domain occupies 72 to 255 (RLIAGVDEVG…KTFAPVQSFR (184 aa)). The a divalent metal cation site is built by aspartate 78, glutamate 79, and aspartate 170.

Belongs to the RNase HII family. It depends on Mn(2+) as a cofactor. The cofactor is Mg(2+).

Its subcellular location is the cytoplasm. It catalyses the reaction Endonucleolytic cleavage to 5'-phosphomonoester.. Functionally, endonuclease that specifically degrades the RNA of RNA-DNA hybrids. This Bacillus subtilis (strain 168) protein is Ribonuclease HII (rnhB).